We begin with the raw amino-acid sequence, 258 residues long: MYKDLTGKTAIVTGSSKGIGKAIAERFGKEKMNVVVNYHSDPSGADETLEIIKQNGGKAVSVEADVSKEEGIQALLDTALEHFGTLDVMVNNSGFNGVEAMPHEMSLEDWQRVIDVNVTGTFLGAKAALNHMMKNNIKGNVLNISSVHQQIPRPVNVQYSTSKGGIKMMTETLALNYADKGIRVNAIAPGTIATESNVDTKKEESRQKQLKKIPMKAFGKPEEVAAAAAWLVSEEASYVTGATLFVDGGMTLYPSQLE.

Residue 11–35 (IVTGSSKGIGKAIAERFGKEKMNVV) coordinates NADP(+). A substrate-binding site is contributed by S146. Residue Y159 is the Proton acceptor of the active site.

It belongs to the short-chain dehydrogenases/reductases (SDR) family. Homotetramer.

It catalyses the reaction D-glucose + NAD(+) = D-glucono-1,5-lactone + NADH + H(+). The catalysed reaction is D-glucose + NADP(+) = D-glucono-1,5-lactone + NADPH + H(+). The protein is Glucose 1-dehydrogenase 2 (ycdF) of Bacillus subtilis (strain 168).